A 732-amino-acid chain; its full sequence is uncharacterized protein (732 aa).

2 helical membrane passes run 687-707 (YLFP…GSDL) and 712-732 (GVKV…YYTS).

The protein belongs to the FadG family.

The protein localises to the cell membrane. This is an uncharacterized protein from Bacillus subtilis (strain 168).